The following is a 425-amino-acid chain: Glutamate-1-semialdehyde 2,1-aminomutase (425 aa).

Position 265 is an N6-(pyridoxal phosphate)lysine (lysine 265).

The protein belongs to the class-III pyridoxal-phosphate-dependent aminotransferase family. HemL subfamily. Homodimer. The cofactor is pyridoxal 5'-phosphate.

Its subcellular location is the cytoplasm. It carries out the reaction (S)-4-amino-5-oxopentanoate = 5-aminolevulinate. Its pathway is porphyrin-containing compound metabolism; protoporphyrin-IX biosynthesis; 5-aminolevulinate from L-glutamyl-tRNA(Glu): step 2/2. In Psychromonas ingrahamii (strain DSM 17664 / CCUG 51855 / 37), this protein is Glutamate-1-semialdehyde 2,1-aminomutase.